Here is a 121-residue protein sequence, read N- to C-terminus: Large ribosomal subunit protein eL18 (121 aa).

The protein belongs to the eukaryotic ribosomal protein eL18 family. In terms of assembly, part of the 50S ribosomal subunit.

This Thermococcus kodakarensis (strain ATCC BAA-918 / JCM 12380 / KOD1) (Pyrococcus kodakaraensis (strain KOD1)) protein is Large ribosomal subunit protein eL18.